The chain runs to 191 residues: UPF0312 protein Shew185_3055 (191 aa).

An N-terminal signal peptide occupies residues 1 to 22 (MKKQLLSALIGASLLAPMAASA).

Belongs to the UPF0312 family. Type 1 subfamily.

Its subcellular location is the periplasm. The protein is UPF0312 protein Shew185_3055 of Shewanella baltica (strain OS185).